Consider the following 317-residue polypeptide: uncharacterized protein (317 aa).

Positions 1 to 60 constitute an HTH lysR-type domain; that stretch reads MKHELSSMKAFVILAESSSFNNAAKLLNITQPALTRRIKKMEEDLHVQLFERTTRKVTLT. The segment at residues 20-40 is a DNA-binding region (H-T-H motif); the sequence is FNNAAKLLNITQPALTRRIKK.

This sequence belongs to the LysR transcriptional regulatory family.

This is an uncharacterized protein from Escherichia coli (strain K12).